The following is a 225-amino-acid chain: 2-C-methyl-D-erythritol 4-phosphate cytidylyltransferase (225 aa).

It belongs to the IspD/TarI cytidylyltransferase family. IspD subfamily.

It carries out the reaction 2-C-methyl-D-erythritol 4-phosphate + CTP + H(+) = 4-CDP-2-C-methyl-D-erythritol + diphosphate. It participates in isoprenoid biosynthesis; isopentenyl diphosphate biosynthesis via DXP pathway; isopentenyl diphosphate from 1-deoxy-D-xylulose 5-phosphate: step 2/6. Functionally, catalyzes the formation of 4-diphosphocytidyl-2-C-methyl-D-erythritol from CTP and 2-C-methyl-D-erythritol 4-phosphate (MEP). The sequence is that of 2-C-methyl-D-erythritol 4-phosphate cytidylyltransferase from Chromobacterium violaceum (strain ATCC 12472 / DSM 30191 / JCM 1249 / CCUG 213 / NBRC 12614 / NCIMB 9131 / NCTC 9757 / MK).